Consider the following 185-residue polypeptide: MIDKDKIREGMKLILEAIGEDINREGLIETPDRIARMYEEIFSGIGMNAKEHLSKTFEVHSNDLVLEKDITFYSMCEHHLVPFYGKVHIAYIPNGRVVGLSKLARCVEVYSKKPQLQERLTTEIADSIMEYLDAQGVMVVVEGEHMCMTMRGVRKPGAKTVTTTYRGKFLEDESLKNDVFRMISM.

The Zn(2+) site is built by cysteine 76, histidine 79, and cysteine 147.

It belongs to the GTP cyclohydrolase I family. Toroid-shaped homodecamer, composed of two pentamers of five dimers.

The enzyme catalyses GTP + H2O = 7,8-dihydroneopterin 3'-triphosphate + formate + H(+). The protein operates within cofactor biosynthesis; 7,8-dihydroneopterin triphosphate biosynthesis; 7,8-dihydroneopterin triphosphate from GTP: step 1/1. This chain is GTP cyclohydrolase 1, found in Clostridium perfringens (strain ATCC 13124 / DSM 756 / JCM 1290 / NCIMB 6125 / NCTC 8237 / Type A).